The following is a 227-amino-acid chain: Translation initiation factor 6 (227 aa).

It belongs to the eIF-6 family.

Binds to the 50S ribosomal subunit and prevents its association with the 30S ribosomal subunit to form the 70S initiation complex. The chain is Translation initiation factor 6 from Methanococcus vannielii (strain ATCC 35089 / DSM 1224 / JCM 13029 / OCM 148 / SB).